The chain runs to 276 residues: MSTYEGRWKTVKVEIEDGIAFVILNRPEKRNAMSPTLNREMIDVLETLEQDPAAGVLVLTGAGEAWTAGMDLKEYFREVDAGPEILQEKIRREASQWQWKLLRMYAKPTIAMVNGWCFGGGFSPLVACDLAICADEATFGLSEINWGIPPGNLVSKAMADTVGHRQSLYYIMTGKTFGGQKAAEMGLVNESVPLAQLREVTIELARNLLEKNPVVLRAAKHGFKRCRELTWEQNEDYLYAKLDQSRLLDTEGGREQGMKQFLDDKSIKPGLQAYKR.

4 residues coordinate acetyl-CoA: K29, A68, M70, and L72. Residue Y75 participates in vanillin binding. 3 residues coordinate acetyl-CoA: G120, S142, and W146. The vanillin site is built by G151 and Y239.

Belongs to the enoyl-CoA hydratase/isomerase family. Homohexamer; dimer of trimers.

The catalysed reaction is (E)-feruloyl-CoA + H2O = vanillin + acetyl-CoA. It catalyses the reaction (E)-caffeoyl-CoA + H2O = 3,4-dihydroxybenzaldehyde + acetyl-CoA. It carries out the reaction (E)-4-coumaroyl-CoA + H2O = 4-hydroxybenzaldehyde + acetyl-CoA. The enzyme catalyses (E)-feruloyl-CoA + H2O = 3-hydroxy-3-(4-hydroxy-3-methoxyphenyl)propanoyl-CoA. The catalysed reaction is 3-hydroxy-3-(4-hydroxy-3-methoxyphenyl)propanoyl-CoA = vanillin + acetyl-CoA. It catalyses the reaction (E)-caffeoyl-CoA + H2O = 3-hydroxy-3-(3,4-dihydroxyphenyl)propanoyl-CoA. It carries out the reaction 3-hydroxy-3-(3,4-dihydroxyphenyl)propanoyl-CoA = 3,4-dihydroxybenzaldehyde + acetyl-CoA. The enzyme catalyses (E)-4-coumaroyl-CoA + H2O = 3-hydroxy-3-(4-hydroxyphenyl)propanoyl-CoA. The catalysed reaction is 3-hydroxy-3-(4-hydroxyphenyl)propanoyl-CoA = 4-hydroxybenzaldehyde + acetyl-CoA. Its function is as follows. Catalyzes the hydration of the acyl-CoA thioester of ferulic acid and the subsequent retro-aldol cleavage of the hydrated intermediate to yield vanillin (4-hydroxy-3-methoxy-benzaldehyde). The enzyme is also active with caffeoyl-CoA and 4-coumaroyl-CoA producing 3,4-dihydroxybenzaldehyde and 4-hydroxybenzaldehyde, respectively. This chain is Hydroxycinnamoyl-CoA hydratase-lyase, found in Pseudomonas fluorescens.